The sequence spans 123 residues: MPTINQLVRKGRVPQKAKSKVPAMEQNPQKRGVCTRVYTTTPKKPNSALRKVAKVRLTNQREVISYIPGEGHNLQEHSVVLIRGGRVRDLPGVRYHVLRGVLDTQGVKDRKQSRSKYGAKRPK.

The segment at 1–29 (MPTINQLVRKGRVPQKAKSKVPAMEQNPQ) is disordered. A compositionally biased stretch (basic residues) spans 9-19 (RKGRVPQKAKS). Aspartate 89 is modified (3-methylthioaspartic acid).

The protein belongs to the universal ribosomal protein uS12 family. As to quaternary structure, part of the 30S ribosomal subunit. Contacts proteins S8 and S17. May interact with IF1 in the 30S initiation complex.

In terms of biological role, with S4 and S5 plays an important role in translational accuracy. Its function is as follows. Interacts with and stabilizes bases of the 16S rRNA that are involved in tRNA selection in the A site and with the mRNA backbone. Located at the interface of the 30S and 50S subunits, it traverses the body of the 30S subunit contacting proteins on the other side and probably holding the rRNA structure together. The combined cluster of proteins S8, S12 and S17 appears to hold together the shoulder and platform of the 30S subunit. The chain is Small ribosomal subunit protein uS12 from Erythrobacter litoralis (strain HTCC2594).